Reading from the N-terminus, the 380-residue chain is RNA-binding motif protein, Y chromosome, family 9 (380 aa).

Residues 8–86 (GKIFIGGLNI…KRIKVKQARR (79 aa)) enclose the RRM domain. 2 disordered regions span residues 82–226 (KQAR…STSR) and 279–358 (HEAP…YSAS). Over residues 166-178 (RSATSAQTRSNTG) the composition is skewed to polar residues. 2 stretches are compositionally biased toward basic and acidic residues: residues 180 to 190 (RGREPHRREIS) and 333 to 351 (IDRE…HSPK).

As to expression, testis-specific.

It is found in the nucleus. In terms of biological role, RNA-binding protein which may be involved in spermatogenesis. May be required for sperm development, possibly by participating in pre-mRNA splicing in the testis. In Mus musculus (Mouse), this protein is RNA-binding motif protein, Y chromosome, family 9.